The sequence spans 373 residues: tRNA 2-selenouridine synthase (373 aa).

In terms of domain architecture, Rhodanese spans 12 to 136 (FINDRPMMDA…MRGFLLETTE (125 aa)). C95 serves as the catalytic S-selanylcysteine intermediate.

This sequence belongs to the SelU family. In terms of assembly, monomer.

It carries out the reaction 5-methylaminomethyl-2-thiouridine(34) in tRNA + selenophosphate + (2E)-geranyl diphosphate + H2O + H(+) = 5-methylaminomethyl-2-selenouridine(34) in tRNA + (2E)-thiogeraniol + phosphate + diphosphate. The enzyme catalyses 5-methylaminomethyl-2-thiouridine(34) in tRNA + (2E)-geranyl diphosphate = 5-methylaminomethyl-S-(2E)-geranyl-thiouridine(34) in tRNA + diphosphate. The catalysed reaction is 5-methylaminomethyl-S-(2E)-geranyl-thiouridine(34) in tRNA + selenophosphate + H(+) = 5-methylaminomethyl-2-(Se-phospho)selenouridine(34) in tRNA + (2E)-thiogeraniol. It catalyses the reaction 5-methylaminomethyl-2-(Se-phospho)selenouridine(34) in tRNA + H2O = 5-methylaminomethyl-2-selenouridine(34) in tRNA + phosphate. Involved in the post-transcriptional modification of the uridine at the wobble position (U34) of tRNA(Lys), tRNA(Glu) and tRNA(Gln). Catalyzes the conversion of 2-thiouridine (S2U-RNA) to 2-selenouridine (Se2U-RNA). Acts in a two-step process involving geranylation of 2-thiouridine (S2U) to S-geranyl-2-thiouridine (geS2U) and subsequent selenation of the latter derivative to 2-selenouridine (Se2U) in the tRNA chain. The sequence is that of tRNA 2-selenouridine synthase from Ectopseudomonas mendocina (strain ymp) (Pseudomonas mendocina).